Here is a 474-residue protein sequence, read N- to C-terminus: TOM1-like protein 1 (474 aa).

The VHS domain maps to 22 to 154; it reads ATFAGVLTED…DLLKKGVQFP (133 aa). The tract at residues 153–180 is disordered; it reads FPPSDGEPETRQEAGQISPNRPTSVPTA. Over residues 165–178 the composition is skewed to polar residues; sequence EAGQISPNRPTSVP. Ser170 bears the Phosphoserine mark. Residues 199–287 enclose the GAT domain; that stretch reads EQIGKLHSEL…AVLGYERFTR (89 aa). The segment at 291–317 is disordered; it reads RLLEQKRNRTEATRTSSEPSAPSCDLL. Over residues 293 to 302 the composition is skewed to basic and acidic residues; that stretch reads LEQKRNRTEA. Phosphoserine occurs at positions 313 and 320. The segment at 392-395 is interaction with GRB2; sequence YDNF. The short motif at 420–424 is the SH3-binding element; sequence LPPLP. An interaction with PIK3R1 region spans residues 441-444; the sequence is YEVM. Tyr457 carries the post-translational modification Phosphotyrosine. The SH2-binding signature appears at 457–460; it reads YEEI.

Belongs to the TOM1 family. In terms of assembly, interacts with LYN. Interacts with the SH2 and SH3 domains of FYN when phosphorylated. Also interacts with GRB2 and PIK3R1 when phosphorylated. Phosphorylated on tyrosines by LYN. Phosphorylated on tyrosines by FYN. As to expression, strongly expressed in brain and kidney, expressed at intermediate levels skin and heart, and weakly expressed in thymus. Not expressed in liver and spleen.

The protein localises to the golgi apparatus. The protein resides in the golgi stack. It localises to the endosome membrane. Its subcellular location is the cytoplasm. It is found in the membrane. Its function is as follows. Probable adapter protein involved in signaling pathways. Interacts with the SH2 and SH3 domains of various signaling proteins when it is phosphorylated. May promote FYN activation, possibly by disrupting intramolecular SH3-dependent interactions. In Mus musculus (Mouse), this protein is TOM1-like protein 1 (Tom1l1).